We begin with the raw amino-acid sequence, 200 residues long: ATP-dependent Clp protease proteolytic subunit 1 (200 aa).

Catalysis depends on serine 102, which acts as the Nucleophile. Histidine 127 is an active-site residue.

Belongs to the peptidase S14 family. In terms of assembly, fourteen ClpP subunits assemble into 2 heptameric rings which stack back to back to give a disk-like structure with a central cavity, resembling the structure of eukaryotic proteasomes.

It localises to the cytoplasm. The enzyme catalyses Hydrolysis of proteins to small peptides in the presence of ATP and magnesium. alpha-casein is the usual test substrate. In the absence of ATP, only oligopeptides shorter than five residues are hydrolyzed (such as succinyl-Leu-Tyr-|-NHMec, and Leu-Tyr-Leu-|-Tyr-Trp, in which cleavage of the -Tyr-|-Leu- and -Tyr-|-Trp bonds also occurs).. In terms of biological role, cleaves peptides in various proteins in a process that requires ATP hydrolysis. Has a chymotrypsin-like activity. Plays a major role in the degradation of misfolded proteins. This Bradyrhizobium diazoefficiens (strain JCM 10833 / BCRC 13528 / IAM 13628 / NBRC 14792 / USDA 110) protein is ATP-dependent Clp protease proteolytic subunit 1.